The following is a 395-amino-acid chain: NAD(P)H-quinone oxidoreductase subunit H, chloroplastic (395 aa).

It belongs to the complex I 49 kDa subunit family. As to quaternary structure, NDH is composed of at least 16 different subunits, 5 of which are encoded in the nucleus.

The protein localises to the plastid. It is found in the chloroplast thylakoid membrane. The enzyme catalyses a plastoquinone + NADH + (n+1) H(+)(in) = a plastoquinol + NAD(+) + n H(+)(out). The catalysed reaction is a plastoquinone + NADPH + (n+1) H(+)(in) = a plastoquinol + NADP(+) + n H(+)(out). Functionally, NDH shuttles electrons from NAD(P)H:plastoquinone, via FMN and iron-sulfur (Fe-S) centers, to quinones in the photosynthetic chain and possibly in a chloroplast respiratory chain. The immediate electron acceptor for the enzyme in this species is believed to be plastoquinone. Couples the redox reaction to proton translocation, and thus conserves the redox energy in a proton gradient. The sequence is that of NAD(P)H-quinone oxidoreductase subunit H, chloroplastic from Chloranthus spicatus (Chulantree).